A 778-amino-acid chain; its full sequence is Lon protease (778 aa).

The Lon N-terminal domain maps to 4 to 187; it reads LPVLPLTDAV…LLVGWVRAHL (184 aa). 346 to 353 contributes to the ATP binding site; the sequence is GPPGVGKT. Residues 581-762 form the Lon proteolytic domain; that stretch reads TAVPGVATGL…ADVLALALRP (182 aa). Active-site residues include Ser-668 and Lys-711.

This sequence belongs to the peptidase S16 family. As to quaternary structure, homohexamer. Organized in a ring with a central cavity.

It is found in the cytoplasm. It catalyses the reaction Hydrolysis of proteins in presence of ATP.. Functionally, ATP-dependent serine protease that mediates the selective degradation of mutant and abnormal proteins as well as certain short-lived regulatory proteins. Required for cellular homeostasis and for survival from DNA damage and developmental changes induced by stress. Degrades polypeptides processively to yield small peptide fragments that are 5 to 10 amino acids long. Binds to DNA in a double-stranded, site-specific manner. The polypeptide is Lon protease (Salinispora arenicola (strain CNS-205)).